We begin with the raw amino-acid sequence, 459 residues long: Phosphomethylpyrimidine synthase (459 aa).

Substrate-binding positions include Asn81, Met110, Tyr140, His176, 196 to 198, 237 to 240, and Glu276; these read SRG and DSLR. Residue His280 participates in Zn(2+) binding. Tyr303 is a substrate binding site. His344 is a Zn(2+) binding site. Cys424, Cys427, and Cys432 together coordinate [4Fe-4S] cluster.

This sequence belongs to the ThiC family. The cofactor is [4Fe-4S] cluster.

The catalysed reaction is 5-amino-1-(5-phospho-beta-D-ribosyl)imidazole + S-adenosyl-L-methionine = 4-amino-2-methyl-5-(phosphooxymethyl)pyrimidine + CO + 5'-deoxyadenosine + formate + L-methionine + 3 H(+). It functions in the pathway cofactor biosynthesis; thiamine diphosphate biosynthesis. Catalyzes the synthesis of the hydroxymethylpyrimidine phosphate (HMP-P) moiety of thiamine from aminoimidazole ribotide (AIR) in a radical S-adenosyl-L-methionine (SAM)-dependent reaction. This chain is Phosphomethylpyrimidine synthase, found in Gloeobacter violaceus (strain ATCC 29082 / PCC 7421).